Here is a 284-residue protein sequence, read N- to C-terminus: ATP phosphoribosyltransferase (284 aa).

It belongs to the ATP phosphoribosyltransferase family. Long subfamily. It depends on Mg(2+) as a cofactor.

The protein localises to the cytoplasm. It carries out the reaction 1-(5-phospho-beta-D-ribosyl)-ATP + diphosphate = 5-phospho-alpha-D-ribose 1-diphosphate + ATP. The protein operates within amino-acid biosynthesis; L-histidine biosynthesis; L-histidine from 5-phospho-alpha-D-ribose 1-diphosphate: step 1/9. With respect to regulation, feedback inhibited by histidine. Its function is as follows. Catalyzes the condensation of ATP and 5-phosphoribose 1-diphosphate to form N'-(5'-phosphoribosyl)-ATP (PR-ATP). Has a crucial role in the pathway because the rate of histidine biosynthesis seems to be controlled primarily by regulation of HisG enzymatic activity. The chain is ATP phosphoribosyltransferase from Pseudarthrobacter chlorophenolicus (strain ATCC 700700 / DSM 12829 / CIP 107037 / JCM 12360 / KCTC 9906 / NCIMB 13794 / A6) (Arthrobacter chlorophenolicus).